Reading from the N-terminus, the 633-residue chain is MAKENSGHHHQTEARRKKLTLILGVSGLCILFYVLGAWQANTVPSSISKLGCETQSNPSSSSSSSSSSESAELDFKSHNQIELKETNQTIKYFEPCELSLSEYTPCEDRQRGRRFDRNMMKYRERHCPVKDELLYCLIPPPPNYKIPFKWPQSRDYAWYDNIPHKELSVEKAVQNWIQVEGDRFRFPGGGTMFPRGADAYIDDIARLIPLTDGGIRTAIDTGCGVASFGAYLLKRDIMAVSFAPRDTHEAQVQFALERGVPAIIGIMGSRRLPYPARAFDLAHCSRCLIPWFKNDGLYLMEVDRVLRPGGYWILSGPPINWKQYWRGWERTEEDLKKEQDSIEDVAKSLCWKKVTEKGDLSIWQKPLNHIECKKLKQNNKSPPICSSDNADSAWYKDLETCITPLPETNNPDDSAGGALEDWPDRAFAVPPRIIRGTIPEMNAEKFREDNEVWKERIAHYKKIVPELSHGRFRNIMDMNAFLGGFAASMLKYPSWVMNVVPVDAEKQTLGVIYERGLIGTYQDWCEGFSTYPRTYDMIHAGGLFSLYEHRCDLTLILLEMDRILRPEGTVVLRDNVETLNKVEKIVKGMKWKSQIVDHEKGPFNPEKILVAVKTYWTGQPSDKNNNNNNNNNN.

Over 1–18 (MAKENSGHHHQTEARRKK) the chain is Cytoplasmic. A helical; Signal-anchor for type II membrane protein membrane pass occupies residues 19-39 (LTLILGVSGLCILFYVLGAWQ). Over 40–633 (ANTVPSSISK…NNNNNNNNNN (594 aa)) the chain is Lumenal. The tract at residues 50-71 (LGCETQSNPSSSSSSSSSSESA) is disordered. Low complexity predominate over residues 59–70 (SSSSSSSSSSES). N-linked (GlcNAc...) asparagine glycosylation is present at Asn-87.

It belongs to the methyltransferase superfamily.

It is found in the endoplasmic reticulum membrane. The polypeptide is Probable methyltransferase PMT17 (Arabidopsis thaliana (Mouse-ear cress)).